The primary structure comprises 142 residues: NTF2-related export protein 2 (142 aa).

One can recognise an NTF2 domain in the interval 17 to 136 (AAEEFVNIYY…WKIASDCFRF (120 aa)).

In terms of assembly, associates with NXF1, NXF2, NXF3 and NXF5.

The protein localises to the nucleus. The protein resides in the cytoplasm. Its function is as follows. Regulator of protein export for NES-containing proteins. Also plays a role in mRNA nuclear export. The protein is NTF2-related export protein 2 of Homo sapiens (Human).